We begin with the raw amino-acid sequence, 239 residues long: 1-(5-phosphoribosyl)-5-[(5-phosphoribosylamino)methylideneamino] imidazole-4-carboxamide isomerase (239 aa).

The Proton acceptor role is filled by Asp-8. Asp-129 (proton donor) is an active-site residue.

This sequence belongs to the HisA/HisF family.

Its subcellular location is the cytoplasm. It carries out the reaction 1-(5-phospho-beta-D-ribosyl)-5-[(5-phospho-beta-D-ribosylamino)methylideneamino]imidazole-4-carboxamide = 5-[(5-phospho-1-deoxy-D-ribulos-1-ylimino)methylamino]-1-(5-phospho-beta-D-ribosyl)imidazole-4-carboxamide. It functions in the pathway amino-acid biosynthesis; L-histidine biosynthesis; L-histidine from 5-phospho-alpha-D-ribose 1-diphosphate: step 4/9. The sequence is that of 1-(5-phosphoribosyl)-5-[(5-phosphoribosylamino)methylideneamino] imidazole-4-carboxamide isomerase from Legionella pneumophila (strain Paris).